A 230-amino-acid polypeptide reads, in one-letter code: uncharacterized protein (230 aa).

Positions 1 to 11 are enriched in polar residues; the sequence is MPVPSVTVTTD. The interval 1–88 is disordered; the sequence is MPVPSVTVTT…TLKRPTSNSI (88 aa). Residues 63–73 show a composition bias toward basic and acidic residues; the sequence is DDQHRHSDVHS. Residues 79–88 show a composition bias toward polar residues; sequence TLKRPTSNSI. Ser-106 carries the phosphoserine modification. The segment covering 156–179 has biased composition (basic and acidic residues); that stretch reads LKREDSRVSSTKKEHINDHTDMHS. The tract at residues 156–203 is disordered; the sequence is LKREDSRVSSTKKEHINDHTDMHSTRSKVTTNSQGSSLEPNKLNMAVE. Polar residues predominate over residues 182 to 194; the sequence is SKVTTNSQGSSLE.

This is an uncharacterized protein from Saccharomyces cerevisiae (strain ATCC 204508 / S288c) (Baker's yeast).